Reading from the N-terminus, the 414-residue chain is WD repeat-containing protein jip5 (414 aa).

WD repeat units lie at residues 9-48 (PLSA…SDTD), 73-112 (RHKG…VENK), 118-159 (AKDG…SPVS), 222-263 (VSSV…DQDE), and 319-356 (DETE…DGMD). Residues 39-65 (RLPSEESDTDGDGAESTSSSRNGKGHI) form a disordered region. The interval 352–414 (SDGMDGDMAG…QDIMGFADID (63 aa)) is disordered. Positions 369-383 (DSDDSDDGDDSDDSD) are enriched in acidic residues.

This sequence belongs to the WD repeat WDR55 family.

It is found in the nucleus. The protein resides in the nucleolus. The protein is WD repeat-containing protein jip5 (jip5) of Neosartorya fischeri (strain ATCC 1020 / DSM 3700 / CBS 544.65 / FGSC A1164 / JCM 1740 / NRRL 181 / WB 181) (Aspergillus fischerianus).